The chain runs to 296 residues: Farnesyl diphosphate synthase (296 aa).

Isopentenyl diphosphate-binding residues include Lys-46, Arg-49, and His-78. Residues Asp-85 and Asp-91 each coordinate Mg(2+). Arg-96 contributes to the (2E)-geranyl diphosphate binding site. An isopentenyl diphosphate-binding site is contributed by Arg-97. (2E)-geranyl diphosphate is bound by residues Lys-182, Thr-183, Gln-220, and Lys-237.

The protein belongs to the FPP/GGPP synthase family. Mg(2+) is required as a cofactor.

The protein localises to the cytoplasm. It carries out the reaction isopentenyl diphosphate + (2E)-geranyl diphosphate = (2E,6E)-farnesyl diphosphate + diphosphate. The chain is Farnesyl diphosphate synthase (ispA) from Bacillus subtilis (strain 168).